The chain runs to 248 residues: Phosphatidylglycerol--prolipoprotein diacylglyceryl transferase (248 aa).

The next 3 membrane-spanning stretches (helical) occupy residues 6–26 (FSIFGIDIMWYGILITLGVIL), 48–68 (ILVWALPLAIVGARAYYVIFE), and 84–104 (GGGLAIYGGIIAAVITCYVIC). Arg-130 serves as a coordination point for a 1,2-diacyl-sn-glycero-3-phospho-(1'-sn-glycerol). 2 helical membrane passes run 187-207 (GQITSMYMILYGILRFFVEGL) and 214-234 (IGALRVSQLVSIAIIIAGVIL).

It belongs to the Lgt family.

The protein resides in the cell membrane. It carries out the reaction L-cysteinyl-[prolipoprotein] + a 1,2-diacyl-sn-glycero-3-phospho-(1'-sn-glycerol) = an S-1,2-diacyl-sn-glyceryl-L-cysteinyl-[prolipoprotein] + sn-glycerol 1-phosphate + H(+). Its pathway is protein modification; lipoprotein biosynthesis (diacylglyceryl transfer). Functionally, catalyzes the transfer of the diacylglyceryl group from phosphatidylglycerol to the sulfhydryl group of the N-terminal cysteine of a prolipoprotein, the first step in the formation of mature lipoproteins. The protein is Phosphatidylglycerol--prolipoprotein diacylglyceryl transferase of Finegoldia magna (strain ATCC 29328 / DSM 20472 / WAL 2508) (Peptostreptococcus magnus).